We begin with the raw amino-acid sequence, 120 residues long: Large ribosomal subunit protein uL14 (120 aa).

Belongs to the universal ribosomal protein uL14 family. In terms of assembly, part of the 50S ribosomal subunit. Forms a cluster with proteins L3 and L19. In the 70S ribosome, L14 and L19 interact and together make contacts with the 16S rRNA in bridges B5 and B8.

In terms of biological role, binds to 23S rRNA. Forms part of two intersubunit bridges in the 70S ribosome. This is Large ribosomal subunit protein uL14 from Dictyoglomus turgidum (strain DSM 6724 / Z-1310).